An 832-amino-acid chain; its full sequence is Armadillo segment polarity protein (832 aa).

Positions 1–20 (MSYQMPQNRTMSHNPYNSSD) are enriched in polar residues. Residues 1–24 (MSYQMPQNRTMSHNPYNSSDMPMP) form a disordered region. ARM repeat units lie at residues 146–185 (NYQD…QLSK), 188–228 (ASRH…NLSH), 230–269 (RQGL…NLLL), 272–311 (DGSK…ILAY), 356–395 (SSNK…NLSD), 397–434 (ATKV…NLTC), 483–524 (SESA…NLAL), 594–634 (ELNR…ELAV), and 636–675 (KEVA…KMSE). Positions 721–832 (AYEGLYGQGP…QVAAWYDTDL (112 aa)) are disordered. The span at 767-777 (PAGSNPNAGNN) shows a compositional bias: low complexity.

This sequence belongs to the beta-catenin family.

Its subcellular location is the cytoplasm. The protein localises to the cell membrane. It localises to the cell junction. The protein resides in the adherens junction. Functionally, may associate with CadN and participate in the transmission of developmental information. Can associate with alpha-catenin. Accumulates through wg signaling; arm function in wg signal transduction is required early in development for determination of neuroblast fate. Arm and Abl proteins function cooperatively at adherens junctions in both the CNS and epidermis. This is Armadillo segment polarity protein from Aedes aegypti (Yellowfever mosquito).